We begin with the raw amino-acid sequence, 174 residues long: MDTRSYPSPPDRLSVFAESAHLPLSRPFYLDPMVTVHLCPETPVPASYTDELPLLPFSSDTLIMNNYGDPYPFPFPMPYTNYRRCDYTYGPAFIRKRNERERQRVKCVNEGYARLRRHLPEDYLEKRLSKVETLRAAIKYISYLQSLLYPDESETKKNPRTASCGSLDPALRVI.

The tract at residues 92–105 (AFIRKRNERERQRV) is basic motif. The 53-residue stretch at 92–144 (AFIRKRNERERQRVKCVNEGYARLRRHLPEDYLEKRLSKVETLRAAIKYISYL) folds into the bHLH domain. Residues 106-144 (KCVNEGYARLRRHLPEDYLEKRLSKVETLRAAIKYISYL) form a helix-loop-helix motif region. Residues 153 to 174 (SETKKNPRTASCGSLDPALRVI) are disordered.

Efficient DNA binding requires dimerization with another bHLH protein. In terms of tissue distribution, expressed in the salivary duct cells. Also expressed at lower levels in testis and epididymis. Expressed in the olfactory epithelium (OE), in a subset of apical microvillar cells.

It is found in the nucleus. In terms of biological role, transcriptional repressor. Inhibits myogenesis. Plays a role in progenitor cells which differentiate into ductal and acinar, but not myoepithelial, cell lineages in the salivary glands. Involved in the functions of the microvillar cells and Bowman's glands and probably, in a non-cell-autonomous manner, in the development or regeneration of a complete olfactory epithelium (OE). The polypeptide is Achaete-scute homolog 3 (Ascl3) (Mus musculus (Mouse)).